We begin with the raw amino-acid sequence, 101 residues long: Small ribosomal subunit protein uS14 (101 aa).

This sequence belongs to the universal ribosomal protein uS14 family. In terms of assembly, part of the 30S ribosomal subunit. Contacts proteins S3 and S10.

Its function is as follows. Binds 16S rRNA, required for the assembly of 30S particles and may also be responsible for determining the conformation of the 16S rRNA at the A site. The protein is Small ribosomal subunit protein uS14 of Arthrobacter sp. (strain FB24).